We begin with the raw amino-acid sequence, 385 residues long: Putative ribosomal RNA large subunit methyltransferase MJ1653 (385 aa).

Positions 2-81 (TTKLYVDFGG…LDENYIREKI (80 aa)) constitute a PUA domain.

It belongs to the methyltransferase superfamily. RlmI family.

The protein resides in the cytoplasm. This chain is Putative ribosomal RNA large subunit methyltransferase MJ1653, found in Methanocaldococcus jannaschii (strain ATCC 43067 / DSM 2661 / JAL-1 / JCM 10045 / NBRC 100440) (Methanococcus jannaschii).